Consider the following 128-residue polypeptide: UPF0102 protein Rfer_3873 (128 aa).

The span at 1–15 (MAIPQIKTQVGTSKQ) shows a compositional bias: polar residues. Residues 1-20 (MAIPQIKTQVGTSKQAGDAA) are disordered.

Belongs to the UPF0102 family.

This chain is UPF0102 protein Rfer_3873, found in Albidiferax ferrireducens (strain ATCC BAA-621 / DSM 15236 / T118) (Rhodoferax ferrireducens).